Reading from the N-terminus, the 380-residue chain is Tryptophan--tRNA ligase (380 aa).

Residues 81–89 (PSLGMHIGH) carry the 'HIGH' region motif. Residues 253–257 (KMSSS) carry the 'KMSKS' region motif.

This sequence belongs to the class-I aminoacyl-tRNA synthetase family.

The protein resides in the cytoplasm. It carries out the reaction tRNA(Trp) + L-tryptophan + ATP = L-tryptophyl-tRNA(Trp) + AMP + diphosphate + H(+). The chain is Tryptophan--tRNA ligase from Saccharolobus solfataricus (strain ATCC 35092 / DSM 1617 / JCM 11322 / P2) (Sulfolobus solfataricus).